A 3598-amino-acid chain; its full sequence is Dystrophin, isoforms A/C/F/G/H (3598 aa).

Residues 1 to 230 form an actin-binding region; it reads MEPGILIDER…YVMCLYHAME (230 aa). 2 Calponin-homology (CH) domains span residues 12 to 116 and 127 to 230; these read HIQK…LEFN and NGVE…HAME. The disordered stretch occupies residues 233–297; it reads RTRQQEQEQD…SGELKTHSMR (65 aa). Over residues 267–286 the composition is skewed to polar residues; sequence NDQTSLGLYTSDSAGSMEQR. Spectrin repeat units follow at residues 307–420, 423–525, 851–963, 1056–1170, 1173–1275, and 1381–1483; these read VEIS…KILM, AEFQ…KLQQ, QDFG…AIEN, SHID…LLEH, TQLG…LLEQ, and SYES…TLER. Disordered stretches follow at residues 1633-1696, 1716-1742, 1799-1854, 1878-1941, and 2204-2233; these read ARNT…VMPD, SLNPQKVTNTPPPKPAKTKRKAPSSPA, EDSD…ENTS, RDIL…EPLV, and GPRISNGKERPDASSAATMSCRSEYNNEPS. The span at 1663–1679 shows a compositional bias: low complexity; that stretch reads SGESPSSAHTSSSESPT. Basic and acidic residues predominate over residues 1803 to 1816; sequence SSVRVDSQGKEMRR. Residues Ser1832 and Ser1838 each carry the phosphoserine modification. The segment covering 1834 to 1843 has biased composition (acidic residues); the sequence is NDEDSAEQEE. Over residues 1878 to 1893 the composition is skewed to basic and acidic residues; it reads RDILRDSEEEEPKTPD. The span at 2218–2233 shows a compositional bias: polar residues; that stretch reads SAATMSCRSEYNNEPS. Spectrin repeat units follow at residues 2237-2363, 2366-2472, 2475-2576, 2579-2712, and 2715-2819; these read ALAG…QLKN, SDSQ…QLHA, HSLQ…RLES, EHWN…RLDE, and TKMR…VLCQ. Residues 2655 to 2679 form a disordered region; sequence VSDTSDTEANHDSDSRYMSAEEQSR. Residues 2822-2852 are disordered; sequence AQQTHENGDDGRTTSNSGTIGPLPNLGQSVK. The WW domain occupies 2849 to 2882; sequence QSVKPPWERATTAANVPYYIDHERETTHWDHPEM. Residues 3107-3163 form a ZZ-type zinc finger; that stretch reads KHQAKCNICKEYPIVGFRYRCLKCFNFDMCQKCFFFGRNAKNHKLTHPMHEYCTTTT. Zn(2+)-binding residues include Cys3112, Cys3115, Cys3127, Cys3130, Cys3136, Cys3139, His3149, and His3153. Position 3207 is a phosphoserine (Ser3207). Disordered regions lie at residues 3316-3344, 3387-3449, 3483-3545, and 3560-3598; these read EQSGMPEDSNGMQHSSSSMTGLSGQGEQG, DEPN…KGIM, LHQQ…QQHL, and ELESINDDLEDSSSSNTTNTTTTTTTTATTEKTCVELQK. Polar residues-rich tracts occupy residues 3325–3337 and 3408–3439; these read NGMQHSSSSMTGL and ALNSKPNTLQTRSVTASQLNTDSPAKMNQQNG. The span at 3485–3499 shows a compositional bias: low complexity; it reads QQQQQQLQQQPPQQQ. Over residues 3505–3523 the composition is skewed to gly residues; it reads GNGGMDISGGMQTSGGYLG. Over residues 3534–3545 the composition is skewed to low complexity; that stretch reads SSLMQQQHQQHL. Acidic residues predominate over residues 3560-3570; it reads ELESINDDLED. Positions 3571-3589 are enriched in low complexity; it reads SSSSNTTNTTTTTTTTATT.

As to quaternary structure, component of the dystrophin associated protein complex (DAPC). Interacts with Dg, via the Dg WW domain binding sites. Isoform A, isoform F and isoform G are expressed in the midgut endoderm of stage 12 embryos. In stage 16 embryos, expression is also seen in the pericardial cells, cells at the ectoderm segmental border and cells along the midline of the CNS. During embryogenesis, isoform A is also expressed in the visceral mesoderm, muscle attachment sites, mesectodermal cells at the midline, the gut, and throughout muscle fibers. In larvae, isoform A is found in all muscle fibers, but not detectable in the brain or neuropil.

Its subcellular location is the cell membrane. The protein localises to the sarcolemma. It localises to the cytoplasm. The protein resides in the cytoskeleton. Functionally, required for the maintenance of appropriate synaptic retrograde communication and the stabilization of muscle cell architecture or physiology. Both det and Dg are required for maintenance of early dpp signaling in the presumptive crossvein. Isoform A is not required to maintain muscle integrity, but plays a role in neuromuscular homeostasis by regulating neurotransmitter release. May play a role in anchoring the cytoskeleton to the plasma membrane. This Drosophila melanogaster (Fruit fly) protein is Dystrophin, isoforms A/C/F/G/H (Dys).